Here is a 337-residue protein sequence, read N- to C-terminus: N-acetyl-gamma-glutamyl-phosphate reductase (337 aa).

Cysteine 145 is an active-site residue.

The protein belongs to the NAGSA dehydrogenase family. Type 1 subfamily.

It localises to the cytoplasm. The catalysed reaction is N-acetyl-L-glutamate 5-semialdehyde + phosphate + NADP(+) = N-acetyl-L-glutamyl 5-phosphate + NADPH + H(+). It participates in amino-acid biosynthesis; L-arginine biosynthesis; N(2)-acetyl-L-ornithine from L-glutamate: step 3/4. Catalyzes the NADPH-dependent reduction of N-acetyl-5-glutamyl phosphate to yield N-acetyl-L-glutamate 5-semialdehyde. This chain is N-acetyl-gamma-glutamyl-phosphate reductase, found in Methanosarcina barkeri (strain Fusaro / DSM 804).